A 280-amino-acid polypeptide reads, in one-letter code: uncharacterized protein (280 aa).

It belongs to the eukaryotic-type primase small subunit family.

This is an uncharacterized protein from Archaeoglobus fulgidus (strain ATCC 49558 / DSM 4304 / JCM 9628 / NBRC 100126 / VC-16).